Consider the following 1099-residue polypeptide: Zinc finger protein basonuclin-2 (1099 aa).

The interval 45–66 is disordered; sequence EEAEVDVRERETQRDREPKRAR. A compositionally biased stretch (basic and acidic residues) spans 49 to 66; sequence VDVRERETQRDREPKRAR. A Glycyl lysine isopeptide (Lys-Gly) (interchain with G-Cter in SUMO2) cross-link involves residue Lys277. Residues 357–385 form a disordered region; it reads LSTQNEYNESSESEVSPTPYKNDQTPNRN. Low complexity predominate over residues 361 to 372; the sequence is NEYNESSESEVS. The span at 375 to 385 shows a compositional bias: polar residues; sequence PYKNDQTPNRN. Glycyl lysine isopeptide (Lys-Gly) (interchain with G-Cter in SUMO2) cross-links involve residues Lys396, Lys416, and Lys421. A disordered region spans residues 397–423; the sequence is TEPACVSPIQNSAPVSDLTKTEHPKSS. The segment at 441-464 adopts a C2H2-type 1 zinc-finger fold; sequence VFCNACGKTFYDKGTLKIHYNAVH. At Ser561 the chain carries Phosphoserine. Disordered stretches follow at residues 622 to 641 and 648 to 742; these read EPSA…MPVK and DTAD…EGDE. Residue Lys641 forms a Glycyl lysine isopeptide (Lys-Gly) (interchain with G-Cter in SUMO2) linkage. Positions 648-661 are enriched in acidic residues; it reads DTADEFDDEDDDPN. Composition is skewed to basic and acidic residues over residues 670 to 680 and 719 to 742; these read MSHDNHCHSQE and ERDY…EGDE. The C2H2-type 2 zinc-finger motif lies at 833-856; that stretch reads KICYVCKKSFKSSYSVKLHYRNVH. Residues Lys894 and Lys919 each participate in a glycyl lysine isopeptide (Lys-Gly) (interchain with G-Cter in SUMO2) cross-link. Disordered regions lie at residues 929–948 and 968–1008; these read LDVR…HLNG and LQSS…KAEA. The span at 982-995 shows a compositional bias: acidic residues; sequence AGSDEGILLDDIDG. C2H2-type zinc fingers lie at residues 1035–1058 and 1063–1090; these read IMCN…KTVH and HKCK…PNLH. The segment at 1079–1099 is disordered; sequence SRNRHSQNPNLHKNIPFTSVD.

In terms of tissue distribution, highly expressed in testis, uterus and small intestine, and weakly expressed in colon and prostate. Also expressed in skin, primary keratinocytes, immortalized keratinocytes, and HeLa and HEK293 cells. Not detected in blood, thymus, spleen or Hep-G2 cells.

The protein localises to the nucleus. Probable transcription factor specific for skin keratinocytes. May play a role in the differentiation of spermatozoa and oocytes. May also play an important role in early urinary-tract development. The chain is Zinc finger protein basonuclin-2 from Homo sapiens (Human).